The sequence spans 559 residues: Serine/threonine-protein kinase bur1 (559 aa).

The region spanning Tyr-40–Phe-341 is the Protein kinase domain. ATP-binding positions include Leu-46–Val-54 and Lys-69. Residue Asp-171 is the Proton acceptor of the active site. The span at Ser-359–Ala-372 shows a compositional bias: basic and acidic residues. The interval Ser-359–Arg-559 is disordered. Residues Gly-400–Gly-414 are compositionally biased toward gly residues. Composition is skewed to basic and acidic residues over residues Asp-457–Pro-467, Tyr-491–Thr-534, and Pro-543–Arg-559.

The protein belongs to the protein kinase superfamily. CMGC Ser/Thr protein kinase family. CDC2/CDKX subfamily.

It localises to the nucleus. The enzyme catalyses L-seryl-[protein] + ATP = O-phospho-L-seryl-[protein] + ADP + H(+). It carries out the reaction L-threonyl-[protein] + ATP = O-phospho-L-threonyl-[protein] + ADP + H(+). The catalysed reaction is [DNA-directed RNA polymerase] + ATP = phospho-[DNA-directed RNA polymerase] + ADP + H(+). Serine/threonine-protein kinase involved in transcription regulation. Phosphorylates the mus-8/ubc2 ubiquitin-conjugating enzyme (E2), leading to monoubiquitination of histone H2B and the silencing of telomeric-associated genes. Also required for histone H3 methylation. Necessary for the recovery from pheromone-induced growth arrest in the cell cycle G1 phase. This is Serine/threonine-protein kinase bur1 (stk-1) from Neurospora crassa (strain ATCC 24698 / 74-OR23-1A / CBS 708.71 / DSM 1257 / FGSC 987).